We begin with the raw amino-acid sequence, 438 residues long: Enolase (438 aa).

Substrate contacts are provided by histidine 159 and glutamate 168. Catalysis depends on glutamate 211, which acts as the Proton donor. Mg(2+) is bound by residues aspartate 246, glutamate 297, and aspartate 322. Positions 297 and 322 each coordinate substrate. The active-site Proton acceptor is the lysine 347. Substrate contacts are provided by residues 374-377 (SHRS) and lysine 398.

This sequence belongs to the enolase family. As to quaternary structure, homodimer. Mg(2+) serves as cofactor.

Its subcellular location is the cytoplasm. It catalyses the reaction (2R)-2-phosphoglycerate = phosphoenolpyruvate + H2O. It participates in carbohydrate degradation; glycolysis; pyruvate from D-glyceraldehyde 3-phosphate: step 4/5. In Cryphonectria parasitica (Chestnut blight fungus), this protein is Enolase (ENO1).